Consider the following 128-residue polypeptide: Translation initiation factor 5A (128 aa).

Lys-35 carries the post-translational modification Hypusine.

This sequence belongs to the eIF-5A family.

The protein localises to the cytoplasm. Functions by promoting the formation of the first peptide bond. The chain is Translation initiation factor 5A from Methanosarcina barkeri (strain Fusaro / DSM 804).